Consider the following 109-residue polypeptide: Large ribosomal subunit protein uL24 (109 aa).

This sequence belongs to the universal ribosomal protein uL24 family. As to quaternary structure, part of the 50S ribosomal subunit.

In terms of biological role, one of two assembly initiator proteins, it binds directly to the 5'-end of the 23S rRNA, where it nucleates assembly of the 50S subunit. One of the proteins that surrounds the polypeptide exit tunnel on the outside of the subunit. The chain is Large ribosomal subunit protein uL24 from Rickettsia canadensis (strain McKiel).